The chain runs to 179 residues: Ubiquitin-conjugating enzyme E2 C (179 aa).

Residues 1–31 form a disordered region; sequence MASQNRDPAATSVAAARKGAEPSGGAARGPV. A2 carries the N-acetylalanine modification. Position 3 is a phosphoserine (S3). One can recognise a UBC core domain in the interval 30-175; the sequence is PVGKRLQQEL…LQETYSKQVT (146 aa). C114 serves as the catalytic Glycyl thioester intermediate.

It belongs to the ubiquitin-conjugating enzyme family. Component of the APC/C complex, composed of at least 14 distinct subunits that assemble into a complex of at least 19 chains with a combined molecular mass of around 1.2 MDa. Within this complex, directly interacts with ANAPC2. In terms of processing, autoubiquitinated by the APC/C complex, leading to its degradation by the proteasome. Its degradation plays a central role in APC/C regulation, allowing cyclin-A accumulation before S phase entry. APC/C substrates inhibit the autoubiquitination of UBE2C/UBCH10 but not its E2 function, hence APC/C remaining active until its substrates have been destroyed.

The catalysed reaction is S-ubiquitinyl-[E1 ubiquitin-activating enzyme]-L-cysteine + [E2 ubiquitin-conjugating enzyme]-L-cysteine = [E1 ubiquitin-activating enzyme]-L-cysteine + S-ubiquitinyl-[E2 ubiquitin-conjugating enzyme]-L-cysteine.. It catalyses the reaction S-ubiquitinyl-[E1 ubiquitin-activating enzyme]-L-cysteine + [acceptor protein]-L-lysine = [E1 ubiquitin-activating enzyme]-L-cysteine + N(6)-monoubiquitinyl-[acceptor protein]-L-lysine.. The protein operates within protein modification; protein ubiquitination. Accepts ubiquitin from the E1 complex and catalyzes its covalent attachment to other proteins. In vitro catalyzes 'Lys-11'- and 'Lys-48'-linked polyubiquitination. Acts as an essential factor of the anaphase promoting complex/cyclosome (APC/C), a cell cycle-regulated ubiquitin ligase that controls progression through mitosis. Acts by initiating 'Lys-11'-linked polyubiquitin chains on APC/C substrates, leading to the degradation of APC/C substrates by the proteasome and promoting mitotic exit. In Homo sapiens (Human), this protein is Ubiquitin-conjugating enzyme E2 C (UBE2C).